The chain runs to 358 residues: MEKDLSREAYYYHLPEENIAQKPADKRDHSKLMVLNTSTGKVEHKIFNNVLEYINPGDMLIVNNTKVFPARLTGHKESGGKVEVFLLELPTYIRPGVSESIALIKSSRKPKVGSTLTINEALSCRVTEQLAGGKARLQLHYDKDVDVTEILAGIGEIPLPPYIKREEGTTPEDVTRYQTVYANVPGAVAAPTAGLHFTEELLQSLRENGIQFGEVTLHVGYGTFAPVRAENIVEHNIHEEFVSVGQETVDKIIATRKAGGKIWAVGTTTVRSLEFAAAQHGGQIAATEGWCALYIYPGFKFQVIDNLITNFHLPDSSLMFLVSALCRREKLLECYQMAIKEDYRFFSYGDAMAVISGE.

The protein belongs to the QueA family. Monomer.

The protein resides in the cytoplasm. The enzyme catalyses 7-aminomethyl-7-carbaguanosine(34) in tRNA + S-adenosyl-L-methionine = epoxyqueuosine(34) in tRNA + adenine + L-methionine + 2 H(+). It functions in the pathway tRNA modification; tRNA-queuosine biosynthesis. Its function is as follows. Transfers and isomerizes the ribose moiety from AdoMet to the 7-aminomethyl group of 7-deazaguanine (preQ1-tRNA) to give epoxyqueuosine (oQ-tRNA). The sequence is that of S-adenosylmethionine:tRNA ribosyltransferase-isomerase from Desulfotalea psychrophila (strain LSv54 / DSM 12343).